Consider the following 284-residue polypeptide: 2-dehydro-3-deoxyphosphooctonate aldolase (284 aa).

This sequence belongs to the KdsA family.

Its subcellular location is the cytoplasm. The catalysed reaction is D-arabinose 5-phosphate + phosphoenolpyruvate + H2O = 3-deoxy-alpha-D-manno-2-octulosonate-8-phosphate + phosphate. It participates in carbohydrate biosynthesis; 3-deoxy-D-manno-octulosonate biosynthesis; 3-deoxy-D-manno-octulosonate from D-ribulose 5-phosphate: step 2/3. The protein operates within bacterial outer membrane biogenesis; lipopolysaccharide biosynthesis. In Proteus mirabilis (strain HI4320), this protein is 2-dehydro-3-deoxyphosphooctonate aldolase.